We begin with the raw amino-acid sequence, 802 residues long: Homeobox-leucine zipper protein ANTHOCYANINLESS 2 (802 aa).

Residues 71–143 (QPERGTNRGE…RKKRYHRHTP (73 aa)) form a disordered region. Positions 103–113 (RSREEEHESRS) are enriched in basic and acidic residues. A compositionally biased stretch (basic residues) spans 133 to 142 (PRKKRYHRHT). Residues 134–193 (RKKRYHRHTPQQIQELESMFKECPHPDEKQRLELSKRLCLETRQVKFWFQNRRTQMKTQL) constitute a DNA-binding region (homeobox). Residues 182–221 (FQNRRTQMKTQLERHENALLRQENDKLRAENMSIREAMRN) adopt a coiled-coil conformation. Residues 315–546 (GIDQKSVLLE…LQRQCECLAI (232 aa)) enclose the START domain.

It belongs to the HD-ZIP homeobox family. Class IV subfamily. Interacts with AIL7/PLT7, ANT, BBM and AIL1. As to expression, expressed in roots, stems, leaves and floral buds.

Its subcellular location is the nucleus. Functionally, probable transcription factor involved in the regulation of the tissue-specific accumulation of anthocyanins and in cellular organization of the primary root. The protein is Homeobox-leucine zipper protein ANTHOCYANINLESS 2 of Arabidopsis thaliana (Mouse-ear cress).